Reading from the N-terminus, the 334-residue chain is Cytoskeleton protein RodZ (334 aa).

The Cytoplasmic portion of the chain corresponds to 1 to 111 (MNTEATHDQN…LGKRRKKRDG (111 aa)). In terms of domain architecture, HTH cro/C1-type spans 19–71 (LRNAREQLGLSQQAVAERLCLKVSTVRDIEEDKAPSDLASTFLRGYIRSYARL). The segment at residues 30-49 (QQAVAERLCLKVSTVRDIEE) is a DNA-binding region (H-T-H motif). A helical; Signal-anchor for type II membrane protein membrane pass occupies residues 112 to 132 (WLMSFTWLVLFVVVGLTGAWW). Residues 133-334 (WQNHKAQQEE…TLNAEPTPAQ (202 aa)) lie on the Periplasmic side of the membrane. The disordered stretch occupies residues 154-241 (LNADKDSGQS…PSALPTSQAG (88 aa)). 2 stretches are compositionally biased toward low complexity: residues 176-211 (TTPA…TVVA) and 219-241 (TAAT…SQAG).

It belongs to the RodZ family.

It is found in the cell inner membrane. In terms of biological role, cytoskeletal protein that is involved in cell-shape control through regulation of the length of the long axis. In Salmonella choleraesuis (strain SC-B67), this protein is Cytoskeleton protein RodZ.